The primary structure comprises 433 residues: 3-phosphoshikimate 1-carboxyvinyltransferase (433 aa).

3-phosphoshikimate is bound by residues K22, S23, and R27. K22 contributes to the phosphoenolpyruvate binding site. 2 residues coordinate phosphoenolpyruvate: G94 and R122. Residues S168, S169, Q170, S196, D319, and K346 each contribute to the 3-phosphoshikimate site. Q170 provides a ligand contact to phosphoenolpyruvate. The active-site Proton acceptor is the D319. The phosphoenolpyruvate site is built by R350, R394, and K418.

Belongs to the EPSP synthase family. As to quaternary structure, monomer.

The protein localises to the cytoplasm. The enzyme catalyses 3-phosphoshikimate + phosphoenolpyruvate = 5-O-(1-carboxyvinyl)-3-phosphoshikimate + phosphate. Its pathway is metabolic intermediate biosynthesis; chorismate biosynthesis; chorismate from D-erythrose 4-phosphate and phosphoenolpyruvate: step 6/7. In terms of biological role, catalyzes the transfer of the enolpyruvyl moiety of phosphoenolpyruvate (PEP) to the 5-hydroxyl of shikimate-3-phosphate (S3P) to produce enolpyruvyl shikimate-3-phosphate and inorganic phosphate. This is 3-phosphoshikimate 1-carboxyvinyltransferase from Nitrosomonas eutropha (strain DSM 101675 / C91 / Nm57).